A 132-amino-acid chain; its full sequence is Small ribosomal subunit protein uS8 (132 aa).

It belongs to the universal ribosomal protein uS8 family. Part of the 30S ribosomal subunit. Contacts proteins S5 and S12.

Its function is as follows. One of the primary rRNA binding proteins, it binds directly to 16S rRNA central domain where it helps coordinate assembly of the platform of the 30S subunit. In Staphylococcus haemolyticus (strain JCSC1435), this protein is Small ribosomal subunit protein uS8.